A 208-amino-acid chain; its full sequence is Uracil phosphoribosyltransferase (208 aa).

5-phospho-alpha-D-ribose 1-diphosphate-binding positions include R78, R103, and 130–138; that span reads DPMLATGGS. Uracil is bound by residues I193 and 198–200; that span reads GDA. D199 serves as a coordination point for 5-phospho-alpha-D-ribose 1-diphosphate.

Belongs to the UPRTase family. Mg(2+) is required as a cofactor.

The enzyme catalyses UMP + diphosphate = 5-phospho-alpha-D-ribose 1-diphosphate + uracil. Its pathway is pyrimidine metabolism; UMP biosynthesis via salvage pathway; UMP from uracil: step 1/1. Allosterically activated by GTP. Catalyzes the conversion of uracil and 5-phospho-alpha-D-ribose 1-diphosphate (PRPP) to UMP and diphosphate. This is Uracil phosphoribosyltransferase from Shewanella frigidimarina (strain NCIMB 400).